Here is a 251-residue protein sequence, read N- to C-terminus: Mlc titration factor A (251 aa).

Zn(2+) contacts are provided by His-111, His-148, His-152, and Glu-211.

The protein belongs to the MtfA family. In terms of assembly, interacts with Mlc. The cofactor is Zn(2+).

It is found in the cytoplasm. In terms of biological role, involved in the modulation of the activity of the glucose-phosphotransferase system (glucose-PTS). Interacts with the transcriptional repressor Mlc, preventing its interaction with DNA and leading to the modulation of expression of genes regulated by Mlc, including ptsG, which encodes the PTS system glucose-specific EIICB component. Shows zinc-dependent metallopeptidase activity. The chain is Mlc titration factor A from Salmonella arizonae (strain ATCC BAA-731 / CDC346-86 / RSK2980).